The following is a 146-amino-acid chain: Hemoglobin subunit beta (146 aa).

Residue Val-1 is modified to N-acetylvaline. The Globin domain maps to 2–146; the sequence is HLSGEEKACV…VANALAHKYH (145 aa). Thr-12 carries the post-translational modification Phosphothreonine. Ser-44 carries the phosphoserine modification. Lys-59 is modified (N6-acetyllysine). Residue His-63 participates in heme b binding. At Lys-82 the chain carries N6-acetyllysine. His-92 contributes to the heme b binding site. Cys-93 is modified (S-nitrosocysteine). N6-acetyllysine is present on Lys-144.

It belongs to the globin family. Heterotetramer of two alpha chains and two beta chains. In terms of tissue distribution, red blood cells.

In terms of biological role, involved in oxygen transport from the lung to the various peripheral tissues. This chain is Hemoglobin subunit beta (HBB), found in Suncus murinus (Asian house shrew).